Reading from the N-terminus, the 256-residue chain is Thiazole synthase (256 aa).

The active-site Schiff-base intermediate with DXP is the K96. Residues G157, 183–184 (AG), and 205–206 (NT) each bind 1-deoxy-D-xylulose 5-phosphate.

It belongs to the ThiG family. In terms of assembly, homotetramer. Forms heterodimers with either ThiH or ThiS.

It is found in the cytoplasm. The catalysed reaction is [ThiS sulfur-carrier protein]-C-terminal-Gly-aminoethanethioate + 2-iminoacetate + 1-deoxy-D-xylulose 5-phosphate = [ThiS sulfur-carrier protein]-C-terminal Gly-Gly + 2-[(2R,5Z)-2-carboxy-4-methylthiazol-5(2H)-ylidene]ethyl phosphate + 2 H2O + H(+). The protein operates within cofactor biosynthesis; thiamine diphosphate biosynthesis. Catalyzes the rearrangement of 1-deoxy-D-xylulose 5-phosphate (DXP) to produce the thiazole phosphate moiety of thiamine. Sulfur is provided by the thiocarboxylate moiety of the carrier protein ThiS. In vitro, sulfur can be provided by H(2)S. This chain is Thiazole synthase, found in Clostridium beijerinckii (strain ATCC 51743 / NCIMB 8052) (Clostridium acetobutylicum).